Reading from the N-terminus, the 367-residue chain is Probable butyrate kinase (367 aa).

The protein belongs to the acetokinase family.

The protein resides in the cytoplasm. The catalysed reaction is butanoate + ATP = butanoyl phosphate + ADP. The protein is Probable butyrate kinase of Bacillus cereus (strain ATCC 14579 / DSM 31 / CCUG 7414 / JCM 2152 / NBRC 15305 / NCIMB 9373 / NCTC 2599 / NRRL B-3711).